Here is a 717-residue protein sequence, read N- to C-terminus: Copine family protein 5 (717 aa).

In terms of domain architecture, C2 spans 193-318 (YLGGIIVSAE…KYGPGSDNVY (126 aa)). A VWFA domain is found at 377–567 (ELDQRRFDGE…LNKSRIAETA (191 aa)).

This sequence belongs to the copine family.

The polypeptide is Copine family protein 5 (cpna-5) (Caenorhabditis elegans).